The primary structure comprises 200 residues: Small ribosomal subunit protein uS4 (200 aa).

An S4 RNA-binding domain is found at serine 92–valine 155.

This sequence belongs to the universal ribosomal protein uS4 family. As to quaternary structure, part of the 30S ribosomal subunit. Contacts protein S5. The interaction surface between S4 and S5 is involved in control of translational fidelity.

Its function is as follows. One of the primary rRNA binding proteins, it binds directly to 16S rRNA where it nucleates assembly of the body of the 30S subunit. In terms of biological role, with S5 and S12 plays an important role in translational accuracy. The sequence is that of Small ribosomal subunit protein uS4 from Staphylococcus haemolyticus (strain JCSC1435).